The following is a 387-amino-acid chain: 3-ketoacyl-CoA thiolase (387 aa).

Cys-91 functions as the Acyl-thioester intermediate in the catalytic mechanism. Residues His-343 and Cys-373 each act as proton acceptor in the active site.

Belongs to the thiolase-like superfamily. Thiolase family. Heterotetramer of two alpha chains (FadB) and two beta chains (FadA).

The protein resides in the cytoplasm. It catalyses the reaction an acyl-CoA + acetyl-CoA = a 3-oxoacyl-CoA + CoA. Its pathway is lipid metabolism; fatty acid beta-oxidation. Functionally, catalyzes the final step of fatty acid oxidation in which acetyl-CoA is released and the CoA ester of a fatty acid two carbons shorter is formed. The protein is 3-ketoacyl-CoA thiolase of Idiomarina loihiensis (strain ATCC BAA-735 / DSM 15497 / L2-TR).